A 170-amino-acid polypeptide reads, in one-letter code: MTKKVYHQYWFWYLAAFVVFLLDQGSKHWIEAAFDYNETKVFTSFFNFTLRYNPGAAFSFLADAGGWQRWFFTIVAVAASVLLIVWICRVASSKPREAFALSFILGGAVGNLYDRIIHGHVVDFIVVHYQDYYWPAFNLADAAISLGAMVLIADLFINPDKTSGEKPTNA.

The next 3 helical transmembrane spans lie at 5-25, 70-90, and 98-118; these read VYHQ…LDQG, WFFT…ICRV, and AFAL…RIIH. Active-site residues include Asp-123 and Asp-141. Residues 137-157 form a helical membrane-spanning segment; the sequence is FNLADAAISLGAMVLIADLFI.

The protein belongs to the peptidase A8 family.

It localises to the cell inner membrane. The enzyme catalyses Release of signal peptides from bacterial membrane prolipoproteins. Hydrolyzes -Xaa-Yaa-Zaa-|-(S,diacylglyceryl)Cys-, in which Xaa is hydrophobic (preferably Leu), and Yaa (Ala or Ser) and Zaa (Gly or Ala) have small, neutral side chains.. It participates in protein modification; lipoprotein biosynthesis (signal peptide cleavage). In terms of biological role, this protein specifically catalyzes the removal of signal peptides from prolipoproteins. The sequence is that of Lipoprotein signal peptidase from Cellvibrio japonicus (strain Ueda107) (Pseudomonas fluorescens subsp. cellulosa).